Consider the following 101-residue polypeptide: Movement protein (101 aa).

A disordered region spans residues 1-22 (MDPQNSFLLQPRVPTAAPTSGG). Residues 30 to 50 (EVAILSFVGLICFYLLYLWVL) traverse the membrane as a helical segment. Residues 79–101 (NPIPNTQAPPSQGNPGPFVPGTG) are disordered. The segment covering 80–92 (PIPNTQAPPSQGN) has biased composition (polar residues).

This sequence belongs to the mastrevirus movement protein family. Interacts with the capsid protein (CP). Part of a MP-CP-viral DNA complex.

The protein localises to the host membrane. Involved in the viral transport within, and between cells. The chain is Movement protein from Avena sativa (Oat).